A 141-amino-acid chain; its full sequence is Hemoglobin subunit alpha-A (141 aa).

The 141-residue stretch at 1 to 141 folds into the Globin domain; sequence VLSPADKSNV…VGTVLTAKYR (141 aa). Residue His58 coordinates O2. His87 is a binding site for heme b.

It belongs to the globin family. In terms of assembly, heterotetramer of two alpha chains and two beta chains. Red blood cells.

Its function is as follows. Involved in oxygen transport from the lung to the various peripheral tissues. The sequence is that of Hemoglobin subunit alpha-A (HBAA) from Passer montanus (Eurasian tree sparrow).